The primary structure comprises 417 residues: Fatty-acid peroxygenase (417 aa).

Heme is bound at residue Cys363.

Belongs to the cytochrome P450 family. Heme serves as cofactor.

It carries out the reaction a 1,2-saturated fatty acid + H2O2 = a 2-hydroxy fatty acid + H2O. The catalysed reaction is a 2,3-saturated fatty acid + H2O2 = a 3-hydroxy fatty acid + H2O. It catalyses the reaction tetradecanoate + H2O2 = (3R)-hydroxytetradecanoate + H2O. The enzyme catalyses tetradecanoate + H2O2 = (2R)-hydroxytetradecanoate + H2O. It carries out the reaction tetradecanoate + H2O2 = (2S)-hydroxytetradecanoate + H2O. Its function is as follows. Catalyzes the alpha- and beta-hydroxylation of myristic acid in the presence of hydrogen peroxide. This Bacillus subtilis (strain 168) protein is Fatty-acid peroxygenase (cypC).